Reading from the N-terminus, the 143-residue chain is Transcriptional regulator MraZ (143 aa).

SpoVT-AbrB domains lie at 5-47 (TFTP…PKAE) and 76-119 (ADEQ…DAES).

This sequence belongs to the MraZ family. Forms oligomers.

It localises to the cytoplasm. The protein localises to the nucleoid. The sequence is that of Transcriptional regulator MraZ from Corynebacterium jeikeium (strain K411).